The following is a 97-amino-acid chain: Early nodulin-75 (97 aa).

The segment at 1 to 97 (RPHVHPPPEH…PEYQPPHEKP (97 aa)) is disordered. Composition is skewed to pro residues over residues 9–22 (EHQP…PEYQ) and 31–43 (VHPP…PYQK). Residues 76 to 97 (PPHEKPPHEHPPPEYQPPHEKP) show a composition bias toward basic and acidic residues.

The protein belongs to the nodulin 75 family.

Its function is as follows. Involved in early stages of root nodule development. In Medicago sativa (Alfalfa), this protein is Early nodulin-75 (ENOD2).